A 479-amino-acid chain; its full sequence is Glutamyl-tRNA reductase (479 aa).

Residues 49 to 52 (TCNR), serine 109, 114 to 116 (EQQ), and glutamine 120 contribute to the substrate site. Cysteine 50 acts as the Nucleophile in catalysis. 191-196 (GAGSMG) contacts NADP(+).

The protein belongs to the glutamyl-tRNA reductase family. As to quaternary structure, homodimer.

It catalyses the reaction (S)-4-amino-5-oxopentanoate + tRNA(Glu) + NADP(+) = L-glutamyl-tRNA(Glu) + NADPH + H(+). It functions in the pathway porphyrin-containing compound metabolism; protoporphyrin-IX biosynthesis; 5-aminolevulinate from L-glutamyl-tRNA(Glu): step 1/2. Functionally, catalyzes the NADPH-dependent reduction of glutamyl-tRNA(Glu) to glutamate 1-semialdehyde (GSA). This Rhodococcus jostii (strain RHA1) protein is Glutamyl-tRNA reductase.